The following is a 237-amino-acid chain: Phosphoribosylaminoimidazole-succinocarboxamide synthase (237 aa).

This sequence belongs to the SAICAR synthetase family.

It carries out the reaction 5-amino-1-(5-phospho-D-ribosyl)imidazole-4-carboxylate + L-aspartate + ATP = (2S)-2-[5-amino-1-(5-phospho-beta-D-ribosyl)imidazole-4-carboxamido]succinate + ADP + phosphate + 2 H(+). It functions in the pathway purine metabolism; IMP biosynthesis via de novo pathway; 5-amino-1-(5-phospho-D-ribosyl)imidazole-4-carboxamide from 5-amino-1-(5-phospho-D-ribosyl)imidazole-4-carboxylate: step 1/2. The chain is Phosphoribosylaminoimidazole-succinocarboxamide synthase from Hamiltonella defensa subsp. Acyrthosiphon pisum (strain 5AT).